We begin with the raw amino-acid sequence, 258 residues long: Regulatory protein RecX (258 aa).

The protein belongs to the RecX family.

It localises to the cytoplasm. Its function is as follows. Modulates RecA activity. This Streptococcus pyogenes serotype M5 (strain Manfredo) protein is Regulatory protein RecX.